Consider the following 530-residue polypeptide: GMP synthase [glutamine-hydrolyzing] (530 aa).

In terms of domain architecture, Glutamine amidotransferase type-1 spans 18–207; the sequence is TILVLDFGSQ…AVDICQAKTN (190 aa). Catalysis depends on Cys-94, which acts as the Nucleophile. Catalysis depends on residues His-181 and Glu-183. Residues 208 to 405 enclose the GMPS ATP-PPase domain; it reads WSMENFIDTE…LGVPEDLVWR (198 aa). 236–242 contacts ATP; the sequence is SGGVDST. The XMP site is built by Arg-309, Asp-467, Lys-522, and Glu-528.

In terms of assembly, homodimer. Mg(2+) is required as a cofactor.

The protein localises to the cytoplasm. Its subcellular location is the cytosol. The enzyme catalyses XMP + L-glutamine + ATP + H2O = GMP + L-glutamate + AMP + diphosphate + 2 H(+). It functions in the pathway purine metabolism; GMP biosynthesis; GMP from XMP (L-Gln route): step 1/1. In terms of biological role, catalyzes the conversion of xanthine monophosphate (XMP) to GMP in the presence of glutamine and ATP through an adenyl-XMP intermediate. This chain is GMP synthase [glutamine-hydrolyzing] (GUA1), found in Candida albicans (strain SC5314 / ATCC MYA-2876) (Yeast).